The chain runs to 896 residues: DNA mismatch repair protein MutS (896 aa).

Gly-599–Ser-606 provides a ligand contact to ATP.

This sequence belongs to the DNA mismatch repair MutS family.

Its function is as follows. This protein is involved in the repair of mismatches in DNA. It is possible that it carries out the mismatch recognition step. This protein has a weak ATPase activity. The sequence is that of DNA mismatch repair protein MutS from Geobacillus kaustophilus (strain HTA426).